Here is a 305-residue protein sequence, read N- to C-terminus: tRNA pseudouridine synthase B (305 aa).

The Nucleophile role is filled by Asp-39.

It belongs to the pseudouridine synthase TruB family. Type 1 subfamily.

It catalyses the reaction uridine(55) in tRNA = pseudouridine(55) in tRNA. Functionally, responsible for synthesis of pseudouridine from uracil-55 in the psi GC loop of transfer RNAs. In Staphylococcus aureus (strain bovine RF122 / ET3-1), this protein is tRNA pseudouridine synthase B.